An 84-amino-acid polypeptide reads, in one-letter code: Putative defensin-like protein 114 (84 aa).

The signal sequence occupies residues 1-24 (MAITKKCFAAFVLILLFVMPFVYC). Intrachain disulfides connect cysteine 41–cysteine 81, cysteine 47–cysteine 69, cysteine 54–cysteine 79, and cysteine 58–cysteine 80.

It belongs to the DEFL family.

It localises to the secreted. This Arabidopsis thaliana (Mouse-ear cress) protein is Putative defensin-like protein 114.